A 174-amino-acid polypeptide reads, in one-letter code: NADH-ubiquinone oxidoreductase chain 6 (174 aa).

6 helical membrane-spanning segments follow: residues 1-21, 24-44, 47-67, 86-106, 111-131, and 151-171; these read MTYA…GFSS, SPIY…AIIL, GGGY…MVVF, VEVL…VLWV, GMVV…EGEG, and WLVV…IEIA.

Belongs to the complex I subunit 6 family. Core subunit of respiratory chain NADH dehydrogenase (Complex I) which is composed of 45 different subunits.

Its subcellular location is the mitochondrion inner membrane. The enzyme catalyses a ubiquinone + NADH + 5 H(+)(in) = a ubiquinol + NAD(+) + 4 H(+)(out). Core subunit of the mitochondrial membrane respiratory chain NADH dehydrogenase (Complex I) which catalyzes electron transfer from NADH through the respiratory chain, using ubiquinone as an electron acceptor. Essential for the catalytic activity and assembly of complex I. In Pan troglodytes (Chimpanzee), this protein is NADH-ubiquinone oxidoreductase chain 6 (MT-ND6).